A 338-amino-acid polypeptide reads, in one-letter code: 1-aminocyclopropane-1-carboxylate deaminase (338 aa).

The residue at position 51 (lysine 51) is an N6-(pyridoxal phosphate)lysine. Serine 78 serves as the catalytic Nucleophile.

Belongs to the ACC deaminase/D-cysteine desulfhydrase family. In terms of assembly, homotrimer. Requires pyridoxal 5'-phosphate as cofactor.

The enzyme catalyses 1-aminocyclopropane-1-carboxylate + H2O = 2-oxobutanoate + NH4(+). Its function is as follows. Catalyzes a cyclopropane ring-opening reaction, the irreversible conversion of 1-aminocyclopropane-1-carboxylate (ACC) to ammonia and alpha-ketobutyrate. Allows growth on ACC as a nitrogen source. The chain is 1-aminocyclopropane-1-carboxylate deaminase from Burkholderia pseudomallei (strain 1106a).